A 739-amino-acid polypeptide reads, in one-letter code: Prestin (739 aa).

Residues 1-76 are Cytoplasmic-facing; that stretch reads MEHVTVSEEP…PILTWLPSYP (76 aa). A helical transmembrane segment spans residues 77-106; the sequence is LKEYLFGDIVSGISTGVMQLPQGLAYAMLA. At 107 to 109 the chain is on the extracellular side; it reads AVP. The chain crosses the membrane as a helical span at residues 110-127; the sequence is PVFGLYSSFYPVLLYTFF. Residues 128 to 138 lie on the Cytoplasmic side of the membrane; it reads GTSKHISIGTF. Residues 139 to 152 traverse the membrane as a helical segment; that stretch reads AVISLMIGGVAVRE. Residues 153-169 lie on the Extracellular side of the membrane; it reads APDSMFMVNGTNSSLVV. N161 and N164 each carry an N-linked (GlcNAc...) asparagine glycan. Residues 170 to 199 form a helical membrane-spanning segment; that stretch reads NIEARDSRRVEVVVALTTLVGIIQFVLGLL. The Cytoplasmic portion of the chain corresponds to 200 to 209; it reads RFGFLAIYLT. A helical transmembrane segment spans residues 210 to 233; it reads EPLVRGFTTAAAVHVSVSQLKYLL. Residues 234 to 244 lie on the Extracellular side of the membrane; it reads GVKTARFNGPL. Positions 245–256 form an intramembrane region, helical; sequence SVVYSLDAVLRN. At 257–261 the chain is on the extracellular side; the sequence is IADTN. Residues 262-285 form a helical membrane-spanning segment; sequence IVTLIIGLGCTVFLYIIKQLNERF. At 286–294 the chain is on the cytoplasmic side; that stretch reads KKKLLIPIP. Residues 295–310 form a helical membrane-spanning segment; the sequence is GEIIVVIVSTGISYGM. The Extracellular portion of the chain corresponds to 311–335; sequence LMSENYGVDVVGKIPTGLLPPKVPD. A helical membrane pass occupies residues 336–370; sequence FSVFPNLFADAVPIAVVGFSITISLAKTFALKYGY. Residues 371-373 are Cytoplasmic-facing; that stretch reads SVD. Residues 374-391 form a helical membrane-spanning segment; it reads GNQELIALGLCNFVSSFF. Residues 392–399 are Extracellular-facing; sequence HTFVVTAS. Residues 400–409 traverse the membrane as a helical segment; the sequence is MSRSLVQEST. Position 401 (S401) interacts with salicylate. The Cytoplasmic segment spans residues 410 to 413; the sequence is GGHT. The chain crosses the membrane as a helical span at residues 414 to 435; sequence EIAGLLASLLVLLVVVAIGFVF. The Extracellular segment spans residues 436-439; the sequence is QPLP. A helical transmembrane segment spans residues 440 to 467; the sequence is TTVLAAIIMVNLLGMFKQTRDIPVLWRK. Residue S468 is a topological domain, cytoplasmic. The chain crosses the membrane as a helical span at residues 469–484; the sequence is KIELAIWLVSFFASVL. Over 485-486 the chain is Extracellular; it reads LG. The helical transmembrane segment at 487–507 threads the bilayer; that stretch reads LDYGLAVAMAFAILTVIYRTQ. Positions 508-731 are extended region for STAS domain; that stretch reads RPKNVVLGQI…AVLQCKRWRD (224 aa). Residues 508–739 lie on the Cytoplasmic side of the membrane; that stretch reads RPKNVVLGQI…RDLPVHPNIH (232 aa). One can recognise an STAS domain in the interval 528 to 726; the sequence is EYEEAEECSG…PTIHDAVLQC (199 aa).

This sequence belongs to the SLC26A/SulP transporter (TC 2.A.53) family. In terms of assembly, homodimer. Interacts (via STAS domain) with CALM; this interaction is calcium-dependent. As to expression, expressed in hair cells of the auditory organs.

The protein localises to the cell membrane. It catalyses the reaction oxalate(in) + chloride(out) = oxalate(out) + chloride(in). The catalysed reaction is sulfate(out) + chloride(in) = sulfate(in) + chloride(out). With respect to regulation, sulfate/chloride antiport activity is inhibited by salicylate; this inhibition is reversible. Functionally, electrogenic antiporter that exchanges sulfate or oxalate for chloride ion in a strictly coupled manner with a 1:1 stoichiometry. Adopts a dynamic conformation, which alternates between the exposure of the central binding site to the extra- and intracellular solutions leading to an inward-to-outward conformational transition during the transport cycle. Generates voltage-dependent charge movements resembling to the non-linear capacitance (NLC) of the cell membrane, but which are not associated to electromotile activity. This Danio rerio (Zebrafish) protein is Prestin.